Here is a 281-residue protein sequence, read N- to C-terminus: Probable endonuclease 4 (281 aa).

Zn(2+) contacts are provided by H69, H109, E145, D179, H182, H216, D229, H231, and E261.

The protein belongs to the AP endonuclease 2 family. It depends on Zn(2+) as a cofactor.

It catalyses the reaction Endonucleolytic cleavage to 5'-phosphooligonucleotide end-products.. Its function is as follows. Endonuclease IV plays a role in DNA repair. It cleaves phosphodiester bonds at apurinic or apyrimidinic (AP) sites, generating a 3'-hydroxyl group and a 5'-terminal sugar phosphate. This is Probable endonuclease 4 from Proteus mirabilis (strain HI4320).